The sequence spans 661 residues: 3-hydroxypropionyl-coenzyme A synthetase (661 aa).

Asp526 is an active-site residue. Lys617 carries the N6-acetyllysine modification.

The protein belongs to the ATP-dependent AMP-binding enzyme family. As to quaternary structure, homotetramer.

The enzyme catalyses 3-hydroxypropanoate + ATP + CoA = 3-hydroxypropanoyl-CoA + AMP + diphosphate. In terms of biological role, plays a role in the autotrophic CO(2) fixation pathway. Activates 3-hydroxypropionate to its CoA ester. Can also activate propionate, and to a lesser extent acrylate, acetate and butyrate. This Metallosphaera sedula (strain ATCC 51363 / DSM 5348 / JCM 9185 / NBRC 15509 / TH2) protein is 3-hydroxypropionyl-coenzyme A synthetase.